Reading from the N-terminus, the 468-residue chain is Zinc finger protein 672 (468 aa).

4 C2H2-type zinc fingers span residues 15-37 (YSCSVCGKSFQYSAVLLRHERAH), 43-65 (FCCLECGERCARAADLRAHRWTH), 71-93 (YICSECGQSFSHSGLLDLHLGTH), and 100-123 (RPCRLCGRRFPHVPALLLHRARQH). The C2H2-type 5; degenerate zinc-finger motif lies at 129–151 (HRCPLCARSFRQSALPFHLARAH). C2H2-type zinc fingers lie at residues 167–189 (YHCTQCPRAFHSSAGLRNHSRIH), 202–224 (HLCGICGKSFSKSSTLTRHLQRH), 230–252 (FKCPECGKGFLESATLVRHQRTH), 258–280 (YACSDCGRCFSESSTLLRHQRSH), 286–308 (HVCATCGKGFGQRYDLVVHQRSH), 314–336 (FPCPQCGRGFTDRSDLTKHLRTH), 342–364 (YHCELCGKRFTCISNLNVHLRNH), 370–392 (HKCPECGKSFSVASKLALHRKTH), and 398–420 (AECTECGKFFSHGRSLSQHQRSH).

This sequence belongs to the krueppel C2H2-type zinc-finger protein family.

It is found in the nucleus. In terms of biological role, may be involved in transcriptional regulation. The sequence is that of Zinc finger protein 672 (Znf672) from Mus musculus (Mouse).